A 235-amino-acid polypeptide reads, in one-letter code: tRNA1(Val) (adenine(37)-N6)-methyltransferase (235 aa).

This sequence belongs to the methyltransferase superfamily. tRNA (adenine-N(6)-)-methyltransferase family.

It localises to the cytoplasm. The catalysed reaction is adenosine(37) in tRNA1(Val) + S-adenosyl-L-methionine = N(6)-methyladenosine(37) in tRNA1(Val) + S-adenosyl-L-homocysteine + H(+). Specifically methylates the adenine in position 37 of tRNA(1)(Val) (anticodon cmo5UAC). This Glaesserella parasuis serovar 5 (strain SH0165) (Haemophilus parasuis) protein is tRNA1(Val) (adenine(37)-N6)-methyltransferase.